Here is a 576-residue protein sequence, read N- to C-terminus: Acetylcholine receptor subunit alpha-like 2 (576 aa).

A signal peptide spans 1-21; that stretch reads MAPGCCTTRPRPIALLAHIWR. Residues 22–261 are Extracellular-facing; the sequence is HCKPLCLLLV…FFNITLRRKT (240 aa). An N-linked (GlcNAc...) asparagine glycan is attached at N65. 2 disulfides stabilise this stretch: C169–C183 and C243–C244. N254 carries an N-linked (GlcNAc...) asparagine glycan. 3 helical membrane-spanning segments follow: residues 262–285, 293–311, and 327–346; these read LFYT…VFYL, IALC…LLIS, and YLLF…IIIL. At 347-526 the chain is on the cytoplasmic side; that stretch reads NIHYRKPSTH…WGFVAMVMDR (180 aa). The chain crosses the membrane as a helical span at residues 527-545; sequence LFLWLFMIASLVGTFVILG. N-linked (GlcNAc...) asparagine glycosylation occurs at N570.

The protein belongs to the ligand-gated ion channel (TC 1.A.9) family. Acetylcholine receptor (TC 1.A.9.1) subfamily. CNS in embryos.

The protein resides in the postsynaptic cell membrane. It is found in the cell membrane. In terms of biological role, after binding acetylcholine, the AChR responds by an extensive change in conformation that affects all subunits and leads to opening of an ion-conducting channel across the plasma membrane. The chain is Acetylcholine receptor subunit alpha-like 2 (nAChRalpha2) from Drosophila melanogaster (Fruit fly).